A 1226-amino-acid chain; its full sequence is MDKEERKIINQGQEDEMEIYGYNLSRWKLAIVSLGVICTGGFLLLLLYWMPEWRVKATCVRAAIKDCDVVLLRTTDEFKMWFCAKIRVLSLETHPISSPKSMSNKLSNGHAVCLTENPTGENRHGISKYSQAESQQIRYFTHHSVKYFWNDTIHNFDFLKGLDEGVSCTSIYEKHSAGLTKGMHAYRKLLYGVNEIAVKVPSVFKLLIKEVLNPFYIFQLFSVILWSTDEYYYYALAIVVMSIVSIVSSLYSIRKQYVMLHDMVATHSTVRVSVCRVNEEIEEIFSTDLVPGDVMVIPLNGTIMPCDAVLINGTCIVNESMLTGESVPVTKTNLPNPSVDVKGIGDELYNPETHKRHTLFCGTTVIQTRFYTGELVKAIVVRTGFSTSKGQLVRSILYPKPTDFKLYRDAYLFLLCLVAVAGIGFIYTIINSILNEVQVGVIIIESLDIITITVPPALPAAMTAGIVYAQRRLKKIGIFCISPQRINICGQLNLVCFDKTGTLTEDGLDLWGIQRVENARFLSPEENVCNEMLVKSQFVACLATCHSLTKIEGVLSGDPLDLKMFEAIGWILEEATEEETALHNRIMPTVVRPPKQLLPESTPAGNQEMELFELPAIYEIGIVRQFPFSSALQRMSVVARVLGDKKMDAYMKGAPEVIASLCKPETVPVDFQNVLEDFTKQGFRVIALAHRKLESKLTWHKVQNISRDAIENNMDFMGLIIMQNKLKQETPAVLEDLHKANIRTVMVTGDNMLTAVSVARDCGMILPQDKVIIAEALPPKDGKVAKINWHYADSLTQCSHPSAIASEATPVKLVHDSLEDLQMTRYHFAMNGKSFSVILEHFQDLVPKLMLHGTVFARMAPDQKTQLIEALQNVDYFVGMCGDGANDCGALKRAHGGISLSELEASVASPFTSKTPSISCVPNLIREGRAALITSFCVFKFMALYSIIQYFSVTLLYSILSNLGDFQFLFIDLAIILVVVFTMSLNPAWKELVAQRPPSGLISGALLFSVLSQIIICIGFQSLGFFWVKQQPWYEVWHPKSDACNATGSLLWNSSHLDNETELDEHNIQNYENTTVFFISSFQYLIVAIAFSKGKPFRQPCYKNYFFVFSVIFLYVFILFIMLYPVASVDQVLQIVCVPYQWRVTMLIIVLVNAFVSITVEESVDRWRKCCLPWALSCGKKIPKAKYMYLAQELLVDPEWPPKPQTTTEAKGLVKENGSCQIITIT.

Residues 1-28 (MDKEERKIINQGQEDEMEIYGYNLSRWK) are Cytoplasmic-facing. The stretch at 29–49 (LAIVSLGVICTGGFLLLLLYW) is an intramembrane region. At 50–205 (MPEWRVKATC…IAVKVPSVFK (156 aa)) the chain is on the cytoplasmic side. Ser-98 is subject to Phosphoserine. Residues 206–226 (LLIKEVLNPFYIFQLFSVILW) form a helical membrane-spanning segment. Residues 227-232 (STDEYY) are Lumenal-facing. The chain crosses the membrane as a helical span at residues 233–253 (YYALAIVVMSIVSIVSSLYSI). At 254-409 (RKQYVMLHDM…KPTDFKLYRD (156 aa)) the chain is on the cytoplasmic side. Residues 410–430 (AYLFLLCLVAVAGIGFIYTII) form a helical membrane-spanning segment. At 431–448 (NSILNEVQVGVIIIESLD) the chain is on the lumenal side. A helical membrane pass occupies residues 449–469 (IITITVPPALPAAMTAGIVYA). Over 470 to 940 (QRRLKKIGIF…ALITSFCVFK (471 aa)) the chain is Cytoplasmic. The active-site 4-aspartylphosphate intermediate is the Asp-498. Residues Asp-498 and Thr-500 each coordinate Mg(2+). Residues 498 to 500 (DKT), Phe-628, Arg-684, and Asp-750 contribute to the ATP site. At Ser-817 the chain carries Phosphoserine. Asp-883 serves as a coordination point for Mg(2+). 883–887 (DGAND) is a binding site for ATP. Residues 941–961 (FMALYSIIQYFSVTLLYSILS) form a helical membrane-spanning segment. Asn-962 is a topological domain (lumenal). The helical transmembrane segment at 963–983 (LGDFQFLFIDLAIILVVVFTM) threads the bilayer. Residues 984–999 (SLNPAWKELVAQRPPS) lie on the Cytoplasmic side of the membrane. The chain crosses the membrane as a helical span at residues 1000–1020 (GLISGALLFSVLSQIIICIGF). Topologically, residues 1021–1073 (QSLGFFWVKQQPWYEVWHPKSDACNATGSLLWNSSHLDNETELDEHNIQNYEN) are lumenal. A helical transmembrane segment spans residues 1074–1094 (TTVFFISSFQYLIVAIAFSKG). At 1095-1105 (KPFRQPCYKNY) the chain is on the cytoplasmic side. The helical transmembrane segment at 1106-1126 (FFVFSVIFLYVFILFIMLYPV) threads the bilayer. Residues 1127 to 1143 (ASVDQVLQIVCVPYQWR) are Lumenal-facing. Residues 1144–1164 (VTMLIIVLVNAFVSITVEESV) form a helical membrane-spanning segment. At 1165-1226 (DRWRKCCLPW…NGSCQIITIT (62 aa)) the chain is on the cytoplasmic side.

This sequence belongs to the cation transport ATPase (P-type) (TC 3.A.3) family. Type V subfamily.

The protein resides in the recycling endosome membrane. Its subcellular location is the early endosome membrane. The protein localises to the late endosome membrane. It carries out the reaction putrescine(out) + ATP + H2O = putrescine(in) + ADP + phosphate + H(+). Its function is as follows. ATP-driven pump involved in endocytosis-dependent polyamine transport. Uses ATP as an energy source to transfer polyamine precursor putrescine from the endosomal compartment to the cytosol. The polypeptide is Polyamine-transporting ATPase 13A3 (ATP13A3) (Macaca fascicularis (Crab-eating macaque)).